The sequence spans 267 residues: Diphthine synthase (267 aa).

S-adenosyl-L-methionine is bound by residues Leu-9, Asp-87, Ile-90, 115-116, Leu-166, Leu-205, and His-230; that span reads SI.

The protein belongs to the diphthine synthase family. In terms of assembly, homodimer.

It carries out the reaction 2-[(3S)-amino-3-carboxypropyl]-L-histidyl-[translation elongation factor 2] + 3 S-adenosyl-L-methionine = diphthine-[translation elongation factor 2] + 3 S-adenosyl-L-homocysteine + 3 H(+). Its pathway is protein modification; peptidyl-diphthamide biosynthesis. Its function is as follows. S-adenosyl-L-methionine-dependent methyltransferase that catalyzes the trimethylation of the amino group of the modified target histidine residue in translation elongation factor 2 (EF-2), to form an intermediate called diphthine. The three successive methylation reactions represent the second step of diphthamide biosynthesis. In Staphylothermus marinus (strain ATCC 43588 / DSM 3639 / JCM 9404 / F1), this protein is Diphthine synthase.